The chain runs to 93 residues: Large ribosomal subunit protein bL27 (93 aa).

Residues 1-9 (MLRLDLQFF) constitute a propeptide that is removed on maturation.

This sequence belongs to the bacterial ribosomal protein bL27 family. In terms of processing, the N-terminus is cleaved by ribosomal processing cysteine protease Prp.

This is Large ribosomal subunit protein bL27 from Bacillus licheniformis (strain ATCC 14580 / DSM 13 / JCM 2505 / CCUG 7422 / NBRC 12200 / NCIMB 9375 / NCTC 10341 / NRRL NRS-1264 / Gibson 46).